We begin with the raw amino-acid sequence, 397 residues long: Elongation factor Tu (397 aa).

The tr-type G domain maps to 10–207 (KPHVNVGTIG…TLDSYIPEPV (198 aa)). Residues 19-26 (GHVDHGKT) are G1. Residue 19-26 (GHVDHGKT) coordinates GTP. T26 is a Mg(2+) binding site. Residues 60-64 (GITIN) form a G2 region. Y77 bears the Phosphotyrosine mark. The segment at 81 to 84 (DCPG) is G3. A GTP-binding site is contributed by 81 to 85 (DCPGH). Y88 bears the Phosphotyrosine mark. 136-139 (NKAD) is a GTP binding site. The tract at residues 136-139 (NKAD) is G4. The tract at residues 174 to 176 (SAL) is G5.

The protein belongs to the TRAFAC class translation factor GTPase superfamily. Classic translation factor GTPase family. EF-Tu/EF-1A subfamily. As to quaternary structure, monomer.

Its subcellular location is the cytoplasm. It catalyses the reaction GTP + H2O = GDP + phosphate + H(+). Functionally, GTP hydrolase that promotes the GTP-dependent binding of aminoacyl-tRNA to the A-site of ribosomes during protein biosynthesis. This is Elongation factor Tu from Pseudomonas aeruginosa (strain UCBPP-PA14).